The primary structure comprises 247 residues: 1-(5-phosphoribosyl)-5-[(5-phosphoribosylamino)methylideneamino] imidazole-4-carboxamide isomerase (247 aa).

Asp8 serves as the catalytic Proton acceptor. The Proton donor role is filled by Asp131.

This sequence belongs to the HisA/HisF family.

It localises to the cytoplasm. It carries out the reaction 1-(5-phospho-beta-D-ribosyl)-5-[(5-phospho-beta-D-ribosylamino)methylideneamino]imidazole-4-carboxamide = 5-[(5-phospho-1-deoxy-D-ribulos-1-ylimino)methylamino]-1-(5-phospho-beta-D-ribosyl)imidazole-4-carboxamide. The protein operates within amino-acid biosynthesis; L-histidine biosynthesis; L-histidine from 5-phospho-alpha-D-ribose 1-diphosphate: step 4/9. This Cupriavidus metallidurans (strain ATCC 43123 / DSM 2839 / NBRC 102507 / CH34) (Ralstonia metallidurans) protein is 1-(5-phosphoribosyl)-5-[(5-phosphoribosylamino)methylideneamino] imidazole-4-carboxamide isomerase.